The following is a 112-amino-acid chain: Divalent-cation tolerance protein CutA (112 aa).

Cu cation is bound by residues Cys16, His83, and His84.

Belongs to the CutA family. In terms of assembly, homotrimer. Cu cation serves as cofactor.

It localises to the cytoplasm. Its function is as follows. Involved in resistance toward heavy metals. The chain is Divalent-cation tolerance protein CutA from Shigella boydii serotype 18 (strain CDC 3083-94 / BS512).